A 685-amino-acid chain; its full sequence is Galactocerebrosidase (685 aa).

The first 42 residues, methionine 1–alanine 42, serve as a signal peptide directing secretion. Residue threonine 109 coordinates substrate. A glycan (N-linked (GlcNAc...) asparagine) is linked at asparagine 143. Substrate-binding residues include tryptophan 151 and asparagine 197. The Proton donor/acceptor role is filled by glutamate 198. Glutamate 274 (nucleophile) is an active-site residue. The cysteines at positions 287 and 394 are disulfide-linked. A glycan (N-linked (GlcNAc...) asparagine) is linked at asparagine 379. Arginine 396 serves as a coordination point for substrate. 4 N-linked (GlcNAc...) asparagine glycosylation sites follow: asparagine 403, asparagine 556, asparagine 559, and asparagine 602.

The protein belongs to the glycosyl hydrolase 59 family. Detected in urine. Detected in testis, brain and placenta (at protein level). Detected in kidney and liver.

It localises to the lysosome. It carries out the reaction a beta-D-galactosyl-(1&lt;-&gt;1')-N-acylsphing-4-enine + H2O = an N-acylsphing-4-enine + D-galactose. It catalyses the reaction beta-D-galactosyl-(1&lt;-&gt;1)-sphing-4-enine + H2O = sphing-4-enine + D-galactose. The enzyme catalyses a D-galactosylceramide + H2O = an N-acyl-sphingoid base + D-galactose. In terms of biological role, hydrolyzes the galactose ester bonds of glycolipids such as galactosylceramide and galactosylsphingosine. Enzyme with very low activity responsible for the lysosomal catabolism of galactosylceramide, a major lipid in myelin, kidney and epithelial cells of small intestine and colon. In Homo sapiens (Human), this protein is Galactocerebrosidase.